A 671-amino-acid polypeptide reads, in one-letter code: Archaeal Rqc2 homolog aRqcH (671 aa).

Coiled coils occupy residues 291–363 and 410–465; these read KVVV…ARIK and RKNA…MQMK.

This sequence belongs to the NEMF family. In terms of assembly, associates with stalled 50S ribosomal subunits.

Functionally, probably part of the ribosome quality control system (RQC). May mediate the addition of alanine residues (Ala tailing) to incompletely synthesized nascent chains from stalled ribosomes, leading to their degradation. The sequence is that of Archaeal Rqc2 homolog aRqcH from Methanocaldococcus jannaschii (strain ATCC 43067 / DSM 2661 / JAL-1 / JCM 10045 / NBRC 100440) (Methanococcus jannaschii).